The following is a 341-amino-acid chain: Endolytic peptidoglycan transglycosylase RlpA (341 aa).

The N-terminal stretch at 1–26 (MSKRVRSSLILPAVCGLGLAAVLLSS) is a signal peptide. C27 is lipidated: N-palmitoyl cysteine. C27 carries the S-diacylglycerol cysteine lipid modification. The SPOR domain maps to 260-341 (SLPADGLYLQ…LGQPTLVRPD (82 aa)).

Belongs to the RlpA family.

The protein resides in the cell membrane. Lytic transglycosylase with a strong preference for naked glycan strands that lack stem peptides. Required for efficient separation of daughter cells and maintenance of rod shape. This chain is Endolytic peptidoglycan transglycosylase RlpA, found in Pseudomonas aeruginosa (strain UCBPP-PA14).